Here is a 481-residue protein sequence, read N- to C-terminus: Cholesterol 16,22-dihydroxylase CYP90G4 (481 aa).

The helical transmembrane segment at 4–24 (SYLSFFVLSSILVLTLIFFFM) threads the bilayer. Cys426 is a binding site for heme.

It belongs to the cytochrome P450 family. In terms of tissue distribution, mainly expressed in leaves and seed pods and, at low levels, in flowers and stems.

It is found in the membrane. It functions in the pathway steroid metabolism; cholesterol metabolism. Involved in the biosynthesis of spiroketal steroid and saponin natural products from cholesterol such as diosgenin and analogs (e.g. furostanol and spirostanol), plant defense compounds used as main precursors for the industrial production of steroid hormones. During the 5,6-spiroketalization of cholesterol, catalyzes the hydroxylation of cholesterol to form 16S,22S-dihydroxycholesterol and, possibly, the subsequent conversion of 16S,22S-dihydroxycholesterol into 16-oxo-22-hydroxy-cholesterol and 16-hydroxy-22-oxo-cholesterol. 16-hydroxy-22-oxo-cholesterol submit a spontaneous reaction leading to the production of furostanol-type steroid diastereomers, precursors of diosgenin. The chain is Cholesterol 16,22-dihydroxylase CYP90G4 from Trigonella foenum-graecum (Fenugreek).